A 23-amino-acid polypeptide reads, in one-letter code: Superoxide dismutase [Mn], mitochondrial (23 aa).

Belongs to the iron/manganese superoxide dismutase family. As to quaternary structure, homotetramer. Mn(2+) serves as cofactor.

The protein resides in the mitochondrion matrix. It catalyses the reaction 2 superoxide + 2 H(+) = H2O2 + O2. Functionally, destroys superoxide anion radicals which are normally produced within the cells and which are toxic to biological systems. This is Superoxide dismutase [Mn], mitochondrial from Aquarana catesbeiana (American bullfrog).